Here is a 502-residue protein sequence, read N- to C-terminus: L-arabinose isomerase (502 aa).

The Mn(2+) site is built by E306, E333, H350, and H449.

This sequence belongs to the arabinose isomerase family. The cofactor is Mn(2+).

It catalyses the reaction beta-L-arabinopyranose = L-ribulose. Its pathway is carbohydrate degradation; L-arabinose degradation via L-ribulose; D-xylulose 5-phosphate from L-arabinose (bacterial route): step 1/3. Functionally, catalyzes the conversion of L-arabinose to L-ribulose. The protein is L-arabinose isomerase of Flavobacterium johnsoniae (strain ATCC 17061 / DSM 2064 / JCM 8514 / BCRC 14874 / CCUG 350202 / NBRC 14942 / NCIMB 11054 / UW101) (Cytophaga johnsonae).